A 201-amino-acid polypeptide reads, in one-letter code: MEKRDKGSSPMATMMGSRDENEDVENTTRTAETMLRLVPMALCVSALVVMLKNTQTNDYGSLSYSDLGAFRYLVHVNGICAGYSLLSAVIVAMPRASTMPRAWAFFLLDQVLTYVILAAGTVSTEVLYLASKGDTTITWSEACVSFGGFCHKALISIVITFVVVICYAALSLLSSYKLFSKYDSPVLTYPGKGIEIATFHG.

The segment at 1-27 is disordered; the sequence is MEKRDKGSSPMATMMGSRDENEDVENT. Residues 1–30 lie on the Cytoplasmic side of the membrane; that stretch reads MEKRDKGSSPMATMMGSRDENEDVENTTRT. The chain crosses the membrane as a helical span at residues 31 to 51; it reads AETMLRLVPMALCVSALVVML. Residues 52–72 lie on the Extracellular side of the membrane; that stretch reads KNTQTNDYGSLSYSDLGAFRY. The helical transmembrane segment at 73–93 threads the bilayer; the sequence is LVHVNGICAGYSLLSAVIVAM. Over 94-101 the chain is Cytoplasmic; the sequence is PRASTMPR. Residues 102 to 122 form a helical membrane-spanning segment; sequence AWAFFLLDQVLTYVILAAGTV. Residues 123–152 lie on the Extracellular side of the membrane; it reads STEVLYLASKGDTTITWSEACVSFGGFCHK. Residues 153 to 173 traverse the membrane as a helical segment; it reads ALISIVITFVVVICYAALSLL. The Cytoplasmic segment spans residues 174–201; that stretch reads SSYKLFSKYDSPVLTYPGKGIEIATFHG.

It belongs to the Casparian strip membrane proteins (CASP) family. Homodimer and heterodimers.

It localises to the cell membrane. In Populus trichocarpa (Western balsam poplar), this protein is CASP-like protein 2A1.